The primary structure comprises 1401 residues: MEVLMAERANLVFHNKVIDGTAMKRLISRLINHFGMAYTSHILDQVKTLGFQQATATSISLGIDDLLTIPSKGWLVQDAEQQSLILEKHHHYGNVHAVEKLRQSIEIWYATSEYLRQEMNPNFRMTDPLNPVHIMSFSGARGNASQVHQLVGMRGLMSDPQGQMIDLPIQSNLREGLSLTEYIISCYGARKGVVDTAVRTSDAGYLTRRLVEVVQHIVVRRADCGTVRGVSVSPQNGMMPERILIQTLIGRVLADDIYIGPRCIATRNQNIGVGLVNRFITFRAQPISIRTPFTCRSTSWICRLCYGRSPTHGDLVELGEAVGIIAGQSIGEPGTQLTLRTFHTGGVFTGGTAEHVRAPSNGKIRFHEDLVHPTRTRHGHPAFLCSIDLYVTIESEDILHNVNIPPKSFLLVQNDQYVESEQVIAEIRAGTSTLNLKEKVRKHIYSDSDGEMHWSTDVYHAPEFTYGNVHLLSKTSHLWILLGEPCRSSLVSLSIHRDQDQKSAHSLFVKRRSISNLSETNDRARQKIFSAHFSGQKEDRIADYSDLNRIICTDHSNLVYPAILPILAENSDFLSNLLSKRRRNQFIIPLQSIQERKKELMPCSGISMKIPTNGIFCGNSIIAYFDDPRYRRMSSGSTKYGTLEMHSIVKKEDLIQYRGVREFRPKHQKKVDRFFFIPEEVHILPGSSSISIMVRNNSIIGVDTQITLNIRSRVGGLVRVEKKKKRIELKIFSGDIYFPGRADKISRHSGVLIPPGTRKTNEKESKKVKNWIYVQRITPSKKKFFVLVRPVVTYEIMDGITLATLFPPDLLQERDNVQLRVVNYILYGNGKPIRGISDTSIQLVRTCLVLNWNQDKKSSSSEAARASVVELRTNDLIRHFLRIDFVKSPISYIGKRNDPWGLGLLADNGLDWTNINPYSKARIQQTLNQNQGTIHTFLNRNKGCQSLSILSSSNCSRMDPVNGAKYHNVIQESIQEDPLIPIRNSLGPLGTSLPIANFYSFDRLLTHNQILVTNYLQLDNLKQPFQVLKLKYYLIAENGKIYNPNPRSKILLNPLNLNWYFLHHNYCAETSKIMSLGQFICENVFIAKKRPPLKSGQVILVQVDSVVIRSAKPYLATPGATVRGLYGETFYEGDTLVTFHYEKSRSGDITQGLPKVEQVLEVRSVDSISMNLERRVEGWNKCLTRILGIPWGFLIGAELTIAQSRISLVNKIQKVYRSQGVQIHNRHIEIIVRQITSNVLVSEDGMSNVFSPGELIRLLRAKRMGRALEEAICYRALLLGITKASLNTQSFISEASFQETARVLAKAALQGRIDWLKGLKENVVLGGVIPAGTGFRGLVHPSKQYNNLSLETTKKNLFEGGVRDILSHHRKLLDSSLSKKFHNTSHNTIHQTIIYRIYNDS.

Zn(2+) contacts are provided by C224, C295, C302, and C305.

This sequence belongs to the RNA polymerase beta' chain family. RpoC2 subfamily. In plastids the minimal PEP RNA polymerase catalytic core is composed of four subunits: alpha, beta, beta', and beta''. When a (nuclear-encoded) sigma factor is associated with the core the holoenzyme is formed, which can initiate transcription. It depends on Zn(2+) as a cofactor.

It is found in the plastid. It localises to the chloroplast. It catalyses the reaction RNA(n) + a ribonucleoside 5'-triphosphate = RNA(n+1) + diphosphate. In terms of biological role, DNA-dependent RNA polymerase catalyzes the transcription of DNA into RNA using the four ribonucleoside triphosphates as substrates. This chain is DNA-directed RNA polymerase subunit beta'', found in Ipomoea purpurea (Common morning glory).